We begin with the raw amino-acid sequence, 286 residues long: Carbohydrate-binding domain-containing protein Cthe_2159 (286 aa).

An N-terminal signal peptide occupies residues 1–20; that stretch reads MSIKKLILAASILTTLALTG. Residue C21 is the site of N-palmitoyl cysteine attachment. C21 carries the S-diacylglycerol cysteine lipid modification. The segment at 124–225 is polygalacturonic acid-binding; it reads GKDNVLTDAE…GIKVENTEEP (102 aa). The Ca(2+) site is built by R152, D153, D154, N177, D178, D215, D243, D244, and D247.

Monomer.

It is found in the cell membrane. In terms of biological role, binds cellulosic and pectic substrates. Displays no enzyme activity (in vitro). The sequence is that of Carbohydrate-binding domain-containing protein Cthe_2159 from Acetivibrio thermocellus (strain ATCC 27405 / DSM 1237 / JCM 9322 / NBRC 103400 / NCIMB 10682 / NRRL B-4536 / VPI 7372) (Clostridium thermocellum).